Reading from the N-terminus, the 342-residue chain is tRNA N6-adenosine threonylcarbamoyltransferase (342 aa).

The Fe cation site is built by His115 and His119. Residues 138–142, Asp171, Gly184, and Asn276 each bind substrate; that span reads LVSGG. Fe cation is bound at residue Asp304.

This sequence belongs to the KAE1 / TsaD family. It depends on Fe(2+) as a cofactor.

The protein localises to the cytoplasm. The catalysed reaction is L-threonylcarbamoyladenylate + adenosine(37) in tRNA = N(6)-L-threonylcarbamoyladenosine(37) in tRNA + AMP + H(+). Required for the formation of a threonylcarbamoyl group on adenosine at position 37 (t(6)A37) in tRNAs that read codons beginning with adenine. Is involved in the transfer of the threonylcarbamoyl moiety of threonylcarbamoyl-AMP (TC-AMP) to the N6 group of A37, together with TsaE and TsaB. TsaD likely plays a direct catalytic role in this reaction. The chain is tRNA N6-adenosine threonylcarbamoyltransferase from Dichelobacter nodosus (strain VCS1703A).